Here is a 364-residue protein sequence, read N- to C-terminus: 2-oxoglutarate-dependent dioxygenase imqE (364 aa).

The tract at residues K73–G92 is disordered. In terms of domain architecture, Fe2OG dioxygenase spans D199–A315. Residues H227, D229, and H287 each contribute to the Fe cation site. A 2-oxoglutarate-binding site is contributed by R306.

Belongs to the iron/ascorbate-dependent oxidoreductase family. Requires Fe(2+) as cofactor.

The protein operates within secondary metabolite biosynthesis. 2-oxoglutarate-dependent dioxygenase; part of the gene cluster that mediates the biosynthesis of imizoquins A to D, tripeptide-derived alkaloids that serve a protective role against oxidative stress that are essential for normal germination. ImqB is a canonical three-module NRPS that assembles the tripeptide backbone of the imizoquins via condensation of Trp, Tyr, and Leu-derived precursors. N-methylation by imqF and phenol oxidation by imqC, followed by cyclization via the FAD-dependent oxidase imqH carry out the three-step transformation of L-tyrosine into tetrahydroisoquinoline. Importantly, this sequence requires the presence of a free amine in the tyrosine moiety, indicating that isoquinoline formation occurs prior to peptide bond formation. The imidazolidin-4-one ring of imizoquins could form following additional oxidation of the methyl-derived bridgehead carbon by imqH. Lastly, O-methylation by imqG and leucine hydroxylation by imqE complete biosynthesis of the imizoquins. The chain is 2-oxoglutarate-dependent dioxygenase imqE from Aspergillus flavus (strain ATCC 200026 / FGSC A1120 / IAM 13836 / NRRL 3357 / JCM 12722 / SRRC 167).